A 442-amino-acid chain; its full sequence is Glutamyl-tRNA reductase (442 aa).

Residues 50–53 (TCNR), Ser-109, 114–116 (EPQ), and Gln-120 each bind substrate. Residue Cys-51 is the Nucleophile of the active site. 189-194 (GAGEMA) contacts NADP(+).

Belongs to the glutamyl-tRNA reductase family. As to quaternary structure, homodimer.

It catalyses the reaction (S)-4-amino-5-oxopentanoate + tRNA(Glu) + NADP(+) = L-glutamyl-tRNA(Glu) + NADPH + H(+). It participates in porphyrin-containing compound metabolism; protoporphyrin-IX biosynthesis; 5-aminolevulinate from L-glutamyl-tRNA(Glu): step 1/2. In terms of biological role, catalyzes the NADPH-dependent reduction of glutamyl-tRNA(Glu) to glutamate 1-semialdehyde (GSA). The polypeptide is Glutamyl-tRNA reductase (Nitratidesulfovibrio vulgaris (strain DSM 19637 / Miyazaki F) (Desulfovibrio vulgaris)).